Consider the following 206-residue polypeptide: Superoxide dismutase [Mn] (206 aa).

Mn(2+) is bound by residues histidine 27, histidine 82, aspartate 168, and histidine 172.

This sequence belongs to the iron/manganese superoxide dismutase family. In terms of assembly, homodimer. Mn(2+) is required as a cofactor.

The catalysed reaction is 2 superoxide + 2 H(+) = H2O2 + O2. Destroys superoxide anion radicals which are normally produced within the cells and which are toxic to biological systems. The polypeptide is Superoxide dismutase [Mn] (sodA) (Escherichia coli O157:H7).